The following is a 364-amino-acid chain: UDP-N-acetylglucosamine--N-acetylmuramyl-(pentapeptide) pyrophosphoryl-undecaprenol N-acetylglucosamine transferase (364 aa).

UDP-N-acetyl-alpha-D-glucosamine contacts are provided by residues 12-14 (TGG), Asn-124, Arg-167, Ser-195, Ile-249, 268-273 (ALTVSE), and Gln-294.

This sequence belongs to the glycosyltransferase 28 family. MurG subfamily.

It is found in the cell inner membrane. The catalysed reaction is di-trans,octa-cis-undecaprenyl diphospho-N-acetyl-alpha-D-muramoyl-L-alanyl-D-glutamyl-meso-2,6-diaminopimeloyl-D-alanyl-D-alanine + UDP-N-acetyl-alpha-D-glucosamine = di-trans,octa-cis-undecaprenyl diphospho-[N-acetyl-alpha-D-glucosaminyl-(1-&gt;4)]-N-acetyl-alpha-D-muramoyl-L-alanyl-D-glutamyl-meso-2,6-diaminopimeloyl-D-alanyl-D-alanine + UDP + H(+). Its pathway is cell wall biogenesis; peptidoglycan biosynthesis. Functionally, cell wall formation. Catalyzes the transfer of a GlcNAc subunit on undecaprenyl-pyrophosphoryl-MurNAc-pentapeptide (lipid intermediate I) to form undecaprenyl-pyrophosphoryl-MurNAc-(pentapeptide)GlcNAc (lipid intermediate II). The protein is UDP-N-acetylglucosamine--N-acetylmuramyl-(pentapeptide) pyrophosphoryl-undecaprenol N-acetylglucosamine transferase of Alteromonas mediterranea (strain DSM 17117 / CIP 110805 / LMG 28347 / Deep ecotype).